Reading from the N-terminus, the 444-residue chain is Lycopaoctaene synthase (444 aa).

Residues R48 and R73 each contribute to the NADP(+) site. Mg(2+) is bound by residues D76, E79, and D80. Positions 215, 315, and 317 each coordinate NADP(+). 2 helical membrane passes run 391-411 (TAMV…AYVY) and 415-435 (GTSL…IGLF).

This sequence belongs to the phytoene/squalene synthase family. Mg(2+) serves as cofactor.

The protein localises to the membrane. It carries out the reaction 2 (2E,6E)-farnesyl diphosphate + NADH + H(+) = squalene + 2 diphosphate + NAD(+). It catalyses the reaction 2 (2E,6E)-farnesyl diphosphate + NADPH + H(+) = squalene + 2 diphosphate + NADP(+). The enzyme catalyses 2 (2E,6E,10E)-geranylgeranyl diphosphate + NADPH + H(+) = all-trans-lycopaoctaene + 2 diphosphate + NADP(+). In terms of biological role, converts the C20 geranylgeranyl diphosphate (GGPP) to the C40 lycopaoctaene, the first committed intermediate in the production of lycopadiene. Converts farnesyl diphosphate (FPP) into squalene, a precursor for sterol biosynthesis in eukaryotes. Converts with low efficiency the C20 phytyl diphosphate (PPP) to the C40 lycopadiene in vitro. This reaction may not have biological significance in vivo. The sequence is that of Lycopaoctaene synthase from Botryococcus braunii (Green alga).